The primary structure comprises 187 residues: Elongation factor P (187 aa).

It belongs to the elongation factor P family.

It localises to the cytoplasm. The protein operates within protein biosynthesis; polypeptide chain elongation. Involved in peptide bond synthesis. Stimulates efficient translation and peptide-bond synthesis on native or reconstituted 70S ribosomes in vitro. Probably functions indirectly by altering the affinity of the ribosome for aminoacyl-tRNA, thus increasing their reactivity as acceptors for peptidyl transferase. The protein is Elongation factor P of Mycoplasmopsis agalactiae (strain NCTC 10123 / CIP 59.7 / PG2) (Mycoplasma agalactiae).